A 380-amino-acid chain; its full sequence is MKNEMLALILAGGQGTRLGKLTQSIAKPAVQFGGRYRIIDFALSNCANSGIHNVGVVTQYQPLALNNHIGNGSSWGLDGINSGVSILQPYSASEGNRWFEGTSHAIYQNIDYIDNVNPEYVLILSGDHIYKMDYDDMLQSHKDNNASLTVAVLDVPLKEASRFGIMNTDANNRIVEFEEKPAQPKSTKASMGIYIFDWQRLRNMLVAAEKSKVGMSDFGKNVIPNYLESGESVYAYEFSGYWKDVGTIESLWEANMEYISPENALDSRNRQWKIYSRNLISPPNFLGANAHVEDSLVVDGCFVDGTVKHSILSRGAQVREGAEVLDSVIMSGAIIGQGAKIKRAIIGEGAIISDGVEIDGTDEVQVVGYNEVVGVATDED.

Alpha-D-glucose 1-phosphate is bound by residues glycine 164, 179–180, and serine 190; that span reads EK.

Belongs to the bacterial/plant glucose-1-phosphate adenylyltransferase family. As to quaternary structure, homotetramer.

The enzyme catalyses alpha-D-glucose 1-phosphate + ATP + H(+) = ADP-alpha-D-glucose + diphosphate. The protein operates within glycan biosynthesis; glycogen biosynthesis. Involved in the biosynthesis of ADP-glucose, a building block required for the elongation reactions to produce glycogen. Catalyzes the reaction between ATP and alpha-D-glucose 1-phosphate (G1P) to produce pyrophosphate and ADP-Glc. This Streptococcus pneumoniae serotype 2 (strain D39 / NCTC 7466) protein is Glucose-1-phosphate adenylyltransferase.